The primary structure comprises 607 residues: Glutamine--fructose-6-phosphate aminotransferase [isomerizing] (607 aa).

Cys2 functions as the Nucleophile; for GATase activity in the catalytic mechanism. In terms of domain architecture, Glutamine amidotransferase type-2 spans 2–217 (CGIVGIVGHS…DGDWAVVRRD (216 aa)). SIS domains are found at residues 283–422 (LPFD…ARGV) and 455–597 (IARE…VDQP). Lys602 acts as the For Fru-6P isomerization activity in catalysis.

As to quaternary structure, homodimer.

It localises to the cytoplasm. The catalysed reaction is D-fructose 6-phosphate + L-glutamine = D-glucosamine 6-phosphate + L-glutamate. Functionally, catalyzes the first step in hexosamine metabolism, converting fructose-6P into glucosamine-6P using glutamine as a nitrogen source. The polypeptide is Glutamine--fructose-6-phosphate aminotransferase [isomerizing] (Mesorhizobium japonicum (strain LMG 29417 / CECT 9101 / MAFF 303099) (Mesorhizobium loti (strain MAFF 303099))).